Reading from the N-terminus, the 208-residue chain is Tektin bundle-interacting protein 1 (208 aa).

In terms of assembly, microtubule inner protein component of sperm flagellar doublet microtubules. As to expression, expressed in trachea multiciliated cells.

It localises to the cytoplasm. The protein localises to the cytoskeleton. It is found in the cilium axoneme. The protein resides in the flagellum axoneme. Microtubule inner protein (MIP) part of the dynein-decorated doublet microtubules (DMTs) in cilia axoneme, which is required for motile cilia beating. Located at the center of the tektin bundle where may function to recruit tektins or stabilize the bundle. This is Tektin bundle-interacting protein 1 (TEKTIP1) from Bos taurus (Bovine).